We begin with the raw amino-acid sequence, 105 residues long: Large ribosomal subunit protein uL23 (105 aa).

It belongs to the universal ribosomal protein uL23 family. In terms of assembly, part of the 50S ribosomal subunit. Contacts protein L29, and trigger factor when it is bound to the ribosome.

Functionally, one of the early assembly proteins it binds 23S rRNA. One of the proteins that surrounds the polypeptide exit tunnel on the outside of the ribosome. Forms the main docking site for trigger factor binding to the ribosome. The polypeptide is Large ribosomal subunit protein uL23 (Herminiimonas arsenicoxydans).